A 470-amino-acid polypeptide reads, in one-letter code: E3 ubiquitin-protein ligase TRIM21 (470 aa).

The RING-type zinc-finger motif lies at Cys-20–Arg-59. The Zn(2+) site is built by Cys-96, His-99, Cys-118, and His-124. Residues Cys-96–His-127 form a B box-type zinc finger. The stretch at Leu-188–Glu-250 forms a coiled coil. Positions Asp-272–Met-470 constitute a B30.2/SPRY domain.

It belongs to the TRIM/RBCC family. In terms of assembly, homotrimer. Component of a SCF(SKP2)-like complex containing CUL1, SKP1, TRIM21 and SKP2. Interacts with CALR, CUL1, FBXW11, HSPA5, IKBKB, IRF3, SKP1 and VCP. Interacts with SKP2; the interaction with SKP2 does not depend on an intact F-box domain. Interacts (via N-terminus and C-terminus) with DCP2 (via N-terminus and C-terminus). Interacts (via C-terminus) with IRF8 (via C-terminus). Interacts with ULK1, BECN1 and with ATG8 family members, including GABARAP, GABARAPL1, GABARAPL2 and MAP1LC3C/LC3C. Interacts with TRIM21 and SQSTM1/sequestosome 1. Interacts with IRF3. Interacts (via the SPRY domain) with NMI (via coiled-coil domain); the interaction promotes 'Lys-63'-linked ubiquitination of NMI. Interacts with IFI35 and NMI; the interaction facilitates NMI-IFI35 complex formation. Autoubiquitinated; does not lead to its proteasomal degradation. Deubiquitinated by USP4; leading to its stabilization. Autoubiquitinated.

Its subcellular location is the cytoplasm. The protein localises to the cytoplasmic vesicle. It localises to the autophagosome. It is found in the nucleus. The protein resides in the P-body. Its subcellular location is the stress granule. It carries out the reaction S-ubiquitinyl-[E2 ubiquitin-conjugating enzyme]-L-cysteine + [acceptor protein]-L-lysine = [E2 ubiquitin-conjugating enzyme]-L-cysteine + N(6)-ubiquitinyl-[acceptor protein]-L-lysine.. It participates in protein modification; protein ubiquitination. In terms of biological role, E3 ubiquitin-protein ligase whose activity is dependent on E2 enzymes, UBE2D1, UBE2D2, UBE2E1 and UBE2E2. Forms a ubiquitin ligase complex in cooperation with the E2 UBE2D2 that is used not only for the ubiquitination of USP4 and IKBKB but also for its self-ubiquitination. Component of cullin-RING-based SCF (SKP1-CUL1-F-box protein) E3 ubiquitin-protein ligase complexes such as SCF(SKP2)-like complexes. A TRIM21-containing SCF(SKP2)-like complex is shown to mediate ubiquitination of CDKN1B ('Thr-187' phosphorylated-form), thereby promoting its degradation by the proteasome. Monoubiquitinates IKBKB that will negatively regulates Tax-induced NF-kappa-B signaling. Negatively regulates IFN-beta production post-pathogen recognition by catalyzing polyubiquitin-mediated degradation of IRF3. Mediates the ubiquitin-mediated proteasomal degradation of IgG1 heavy chain, which is linked to the VCP-mediated ER-associated degradation (ERAD) pathway. Promotes IRF8 ubiquitination, which enhanced the ability of IRF8 to stimulate cytokine genes transcription in macrophages. Plays a role in the regulation of the cell cycle progression. Enhances the decapping activity of DCP2. Exists as a ribonucleoprotein particle present in all mammalian cells studied and composed of a single polypeptide and one of four small RNA molecules. At least two isoforms are present in nucleated and red blood cells, and tissue specific differences in RO/SSA proteins have been identified. The common feature of these proteins is their ability to bind HY RNAs.2. Involved in the regulation of innate immunity and the inflammatory response in response to IFNG/IFN-gamma. Organizes autophagic machinery by serving as a platform for the assembly of ULK1, Beclin 1/BECN1 and ATG8 family members and recognizes specific autophagy targets, thus coordinating target recognition with assembly of the autophagic apparatus and initiation of autophagy. Also regulates autophagy through FIP200/RB1CC1 ubiquitination and subsequent decreased protein stability. Represses the innate antiviral response by facilitating the formation of the NMI-IFI35 complex through 'Lys-63'-linked ubiquitination of NMI. During viral infection, promotes cell pyroptosis by mediating 'Lys-6'-linked ubiquitination of ISG12a/IFI27, facilitating its translocation into the mitochondria and subsequent CASP3 activation. When up-regulated through the IFN/JAK/STAT signaling pathway, promotes 'Lys-27'-linked ubiquitination of MAVS, leading to the recruitment of TBK1 and up-regulation of innate immunity. Mediates 'Lys-63'-linked polyubiquitination of G3BP1 in response to heat shock, leading to stress granule disassembly. This chain is E3 ubiquitin-protein ligase TRIM21 (Trim21), found in Mus musculus (Mouse).